Reading from the N-terminus, the 155-residue chain is MSKETKLQVEAIKNGTVIDHIPAKVGIKVLKLFDMHNSTQRVTIGLNLPSSALGSKDLLKIENVFISEAQASKLALYAPHATVNQIENYEVVKKLALQLPERINNVFACPNSNCISHNEPVESSFKLSEKNNDIRLKCKYCEKVFARDVVTEIEA.

Residues C109, C114, C138, and C141 each coordinate Zn(2+).

It belongs to the PyrI family. In terms of assembly, contains catalytic and regulatory chains. Zn(2+) is required as a cofactor.

Involved in allosteric regulation of aspartate carbamoyltransferase. This chain is Aspartate carbamoyltransferase regulatory chain, found in Vibrio cholerae serotype O1 (strain ATCC 39541 / Classical Ogawa 395 / O395).